Consider the following 87-residue polypeptide: Small ribosomal subunit protein uS17 (87 aa).

The protein belongs to the universal ribosomal protein uS17 family. Part of the 30S ribosomal subunit.

In terms of biological role, one of the primary rRNA binding proteins, it binds specifically to the 5'-end of 16S ribosomal RNA. This chain is Small ribosomal subunit protein uS17, found in Neisseria meningitidis serogroup C (strain 053442).